A 435-amino-acid polypeptide reads, in one-letter code: Divergent protein kinase domain 2B (435 aa).

Residues 1-33 (MESQWRGAAATAFHQHWLARLLLWVSTLSCSFS) form the signal peptide. Residues Asn-102 and Asn-395 are each glycosylated (N-linked (GlcNAc...) asparagine).

It belongs to the DIPK family.

It localises to the secreted. In Mus musculus (Mouse), this protein is Divergent protein kinase domain 2B (Dipk2b).